A 594-amino-acid chain; its full sequence is (-)-endo-fenchol synthase, chloroplastic (594 aa).

A chloroplast-targeting transit peptide spans 1 to 50; it reads MSSLVMHVGIVNKPAITYLPTLSRSASNLHNVSSTRLQTSCSLQLDYKPV. Mg(2+) contacts are provided by aspartate 348, aspartate 352, aspartate 492, and glutamate 500. Positions 348-352 match the DDXXD motif motif; it reads DDIYD.

The protein belongs to the terpene synthase family. Tpsa subfamily. Mg(2+) serves as cofactor. It depends on Mn(2+) as a cofactor. In terms of tissue distribution, expressed at high levels in leaves.

The protein resides in the plastid. It is found in the chloroplast. It carries out the reaction (2E)-geranyl diphosphate = alpha-pinene + diphosphate. The catalysed reaction is (2E)-geranyl diphosphate + H2O = (1S,2S,4R)-endo-fenchol + diphosphate. It catalyses the reaction (2E)-geranyl diphosphate = limonene + diphosphate. It functions in the pathway secondary metabolite biosynthesis; terpenoid biosynthesis. Functionally, monoterpene synthase involved in the biosynthesis of volatile compounds widely used in aromatherapy and folk medicine, and present in culinary herbs. Mediates the conversion of (2E)-geranyl diphosphate (GPP) into alpha fenchol, limonene and alpha-pinene and, as minor compounds, into beta-myrcene, alpha-terpinolene and alpha-phellandrene. This Lavandula pedunculata subsp. lusitanica (French lavender) protein is (-)-endo-fenchol synthase, chloroplastic.